Here is a 291-residue protein sequence, read N- to C-terminus: Undecaprenyl-diphosphatase (291 aa).

8 helical membrane-spanning segments follow: residues 1 to 21 (MLILELIKGIILGIVEGLTEF), 48 to 68 (SAFTFKIVIQLGSVFAGAWVF), 99 to 119 (LHIIVGMIPAGVLGLLFDDVI), 123 to 143 (LFSVPTVMIGLFIGAIYMIIA), 159 to 179 (INYFQAFVIGLSQAIAMWPGF), 200 to 220 (SDFTFIMAVPVMLAASGLSLV), 236 to 256 (LGFLAAFIVGLIAIKTFLYLI), and 269 to 289 (IVLVIIIAILYFGFGIGQGIT).

The protein belongs to the UppP family.

Its subcellular location is the cell membrane. The catalysed reaction is di-trans,octa-cis-undecaprenyl diphosphate + H2O = di-trans,octa-cis-undecaprenyl phosphate + phosphate + H(+). In terms of biological role, catalyzes the dephosphorylation of undecaprenyl diphosphate (UPP). Confers resistance to bacitracin. The chain is Undecaprenyl-diphosphatase from Staphylococcus saprophyticus subsp. saprophyticus (strain ATCC 15305 / DSM 20229 / NCIMB 8711 / NCTC 7292 / S-41).